We begin with the raw amino-acid sequence, 540 residues long: GMP synthase [glutamine-hydrolyzing] (540 aa).

Residues 24-217 (KILIVDFGSQ…VRKVAGLTGD (194 aa)) enclose the Glutamine amidotransferase type-1 domain. Cys-101 acts as the Nucleophile in catalysis. Catalysis depends on residues His-191 and Glu-193. The GMPS ATP-PPase domain maps to 218–415 (WTMRAFREEA…LGLPEIFVGR (198 aa)). Residue 245-251 (SGGVDSS) participates in ATP binding.

In terms of assembly, homodimer.

The enzyme catalyses XMP + L-glutamine + ATP + H2O = GMP + L-glutamate + AMP + diphosphate + 2 H(+). Its pathway is purine metabolism; GMP biosynthesis; GMP from XMP (L-Gln route): step 1/1. Catalyzes the synthesis of GMP from XMP. In Nitrobacter hamburgensis (strain DSM 10229 / NCIMB 13809 / X14), this protein is GMP synthase [glutamine-hydrolyzing].